A 93-amino-acid chain; its full sequence is Chromosomal protein MC1 (93 aa).

Residues 1 to 43 (SNTRNFVLRDEEGNEHGVFTGKQPRQAALKAANRGDGTKSNPD) are disordered.

Its function is as follows. Protects DNA against thermal denaturation and modulates transcription. The protein is Chromosomal protein MC1 of Methanosarcina barkeri.